Here is a 334-residue protein sequence, read N- to C-terminus: D-fructose 1,6-bisphosphatase class 2/sedoheptulose 1,7-bisphosphatase (334 aa).

Positions 33, 57, 85, and 88 each coordinate Mn(2+). Residues 88 to 90, tyrosine 119, 164 to 166, and 186 to 188 contribute to the substrate site; these read EGT, RAR, and DGD. Glutamate 213 provides a ligand contact to Mn(2+).

This sequence belongs to the FBPase class 2 family. In terms of assembly, homotetramer. Requires Mn(2+) as cofactor.

The enzyme catalyses beta-D-fructose 1,6-bisphosphate + H2O = beta-D-fructose 6-phosphate + phosphate. The catalysed reaction is D-sedoheptulose 1,7-bisphosphate + H2O = D-sedoheptulose 7-phosphate + phosphate. It participates in carbohydrate biosynthesis; Calvin cycle. Its function is as follows. Catalyzes the hydrolysis of fructose 1,6-bisphosphate (Fru 1,6-P2) and sedoheptulose 1,7-bisphosphate (Sed 1,7-P2) to fructose 6-phosphate and sedoheptulose 7-phosphate, respectively. The polypeptide is D-fructose 1,6-bisphosphatase class 2/sedoheptulose 1,7-bisphosphatase (Synechococcus sp. (strain CC9605)).